The sequence spans 184 residues: Photosystem I assembly protein Ycf4 (184 aa).

Helical transmembrane passes span 22-42 (FCWA…GTSS) and 57-77 (ILFF…LFIS).

This sequence belongs to the Ycf4 family.

It localises to the plastid. The protein resides in the chloroplast thylakoid membrane. Functionally, seems to be required for the assembly of the photosystem I complex. The sequence is that of Photosystem I assembly protein Ycf4 from Phalaenopsis aphrodite subsp. formosana (Moth orchid).